The following is a 1426-amino-acid chain: Ferlin 2 (1426 aa).

5 consecutive C2 domains span residues 1 to 111, 161 to 279, 512 to 638, 1031 to 1154, and 1189 to 1318; these read MGKT…QIRK, RKAV…PRWF, EKSK…ESPT, SEDR…QKSM, and KAGE…TLNS. The disordered stretch occupies residues 1357–1377; the sequence is SKPVGLGREPPNRDPRLTTPQ. The segment covering 1366 to 1377 has biased composition (basic and acidic residues); it reads PPNRDPRLTTPQ. A helical membrane pass occupies residues 1404-1424; it reads VAAVVFLSIWIFVVAFLYPSL.

It belongs to the ferlin family.

The protein localises to the membrane. It localises to the inner membrane complex. Its subcellular location is the cytoplasmic vesicle. The protein resides in the secretory vesicle. It is found in the rhoptry. In terms of biological role, regulates rhoptry secretion. Required for completing the lytic cycle. Required for host cell invasion. Not required for microneme secretion and conoid extrusion. In Toxoplasma gondii, this protein is Ferlin 2.